A 246-amino-acid chain; its full sequence is Ribosomal RNA small subunit methyltransferase J (246 aa).

Residues 115–116 (ER) and Asp-169 each bind S-adenosyl-L-methionine.

This sequence belongs to the methyltransferase superfamily. RsmJ family.

It is found in the cytoplasm. The catalysed reaction is guanosine(1516) in 16S rRNA + S-adenosyl-L-methionine = N(2)-methylguanosine(1516) in 16S rRNA + S-adenosyl-L-homocysteine + H(+). Its function is as follows. Specifically methylates the guanosine in position 1516 of 16S rRNA. The protein is Ribosomal RNA small subunit methyltransferase J of Buchnera aphidicola subsp. Acyrthosiphon pisum (strain Tuc7).